Consider the following 413-residue polypeptide: Glucose-1-phosphate adenylyltransferase (413 aa).

Residues Tyr-102, Gly-167, 182–183 (EK), and Ser-200 each bind alpha-D-glucose 1-phosphate.

This sequence belongs to the bacterial/plant glucose-1-phosphate adenylyltransferase family. As to quaternary structure, homotetramer.

The enzyme catalyses alpha-D-glucose 1-phosphate + ATP + H(+) = ADP-alpha-D-glucose + diphosphate. It participates in glycan biosynthesis; glycogen biosynthesis. Involved in the biosynthesis of ADP-glucose, a building block required for the elongation reactions to produce glycogen. Catalyzes the reaction between ATP and alpha-D-glucose 1-phosphate (G1P) to produce pyrophosphate and ADP-Glc. The polypeptide is Glucose-1-phosphate adenylyltransferase (Deinococcus radiodurans (strain ATCC 13939 / DSM 20539 / JCM 16871 / CCUG 27074 / LMG 4051 / NBRC 15346 / NCIMB 9279 / VKM B-1422 / R1)).